The sequence spans 296 residues: Transcription factor Pur-alpha 1 (296 aa).

N-acetylmethionine is present on Met1. Disordered stretches follow at residues 1–25 and 186–214; these read MEAN…GGGG and IPGH…EETG. Residue Ser207 is modified to Phosphoserine.

The protein belongs to the PUR DNA-binding protein family. As to quaternary structure, homodimer. Interacts with TCP20.

Its subcellular location is the nucleus. Its function is as follows. Transcription factor that specifically binds the purine-rich double-stranded telomeric repeated sequence 5'-AAACCCTAA-3' found in promoter telo boxes. In Arabidopsis thaliana (Mouse-ear cress), this protein is Transcription factor Pur-alpha 1 (PURA1).